The chain runs to 564 residues: Keratin, type II cytoskeletal 6C (564 aa).

Over residues 1 to 11 (MASTSTTIRSH) the composition is skewed to low complexity. The interval 1–23 (MASTSTTIRSHSSSRRGFSANSA) is disordered. Ala-2 is modified (N-acetylalanine). A head region spans residues 2–162 (ASTSTTIRSH…DPAIQRVRAE (161 aa)). A Phosphoserine modification is found at Ser-60. The segment at 163–198 (EREQIKTLNNKFASFIDKVRFLEQQNKVLDTKWTLL) is coil 1A. One can recognise an IF rod domain in the interval 163–476 (EREQIKTLNN…KLLEGEECRL (314 aa)). Residues 199-217 (QEQGTKTVRQNLEPLFEQY) are linker 1. The segment at 218 to 309 (INNLRRQLDS…ALYDAELSQM (92 aa)) is coil 1B. A linker 12 region spans residues 310–333 (QTHISDTSVVLSMDNNRNLDLDSI). Residues 334–472 (IAEVKAQYEE…ATYRKLLEGE (139 aa)) form a coil 2 region. The tract at residues 473 to 564 (ECRLNGEGVG…SSSSRKSYKH (92 aa)) is tail.

This sequence belongs to the intermediate filament family. In terms of assembly, heterodimer of a type I and a type II keratin. KRT6 isomers associate with KRT16 and/or KRT17. As to expression, constitutively expressed in distinct types of epithelia such as those in oral mucosa, esophagus, papillae of tongue and hair follicle outer root sheath.

This is Keratin, type II cytoskeletal 6C (KRT6C) from Homo sapiens (Human).